A 185-amino-acid chain; its full sequence is Ribosome-recycling factor (185 aa).

The protein belongs to the RRF family.

It localises to the cytoplasm. Functionally, responsible for the release of ribosomes from messenger RNA at the termination of protein biosynthesis. May increase the efficiency of translation by recycling ribosomes from one round of translation to another. The protein is Ribosome-recycling factor of Campylobacter jejuni subsp. doylei (strain ATCC BAA-1458 / RM4099 / 269.97).